The primary structure comprises 480 residues: Cysteine--tRNA ligase (480 aa).

Cys-29 lines the Zn(2+) pocket. The 'HIGH' region signature appears at 31–41; it reads PTVYSDPHLGH. Residues Cys-220, His-245, and Glu-249 each coordinate Zn(2+). The 'KMSKS' region signature appears at 276-280; sequence KMAKS. Lys-279 contributes to the ATP binding site.

This sequence belongs to the class-I aminoacyl-tRNA synthetase family. As to quaternary structure, monomer. The cofactor is Zn(2+).

Its subcellular location is the cytoplasm. It catalyses the reaction tRNA(Cys) + L-cysteine + ATP = L-cysteinyl-tRNA(Cys) + AMP + diphosphate. The chain is Cysteine--tRNA ligase from Thermus thermophilus (strain ATCC BAA-163 / DSM 7039 / HB27).